Reading from the N-terminus, the 224-residue chain is Putative adhesin RMA_1308 (224 aa).

An N-terminal signal peptide occupies residues 1 to 22 (MQKLLLIAATSATILSSSLSFA).

In Rickettsia massiliae (strain Mtu5), this protein is Putative adhesin RMA_1308.